Consider the following 61-residue polypeptide: Large ribosomal subunit protein bL32 (61 aa).

Positions 1 to 22 (MAVPKKKTSRARRDRRRSHHAL) are enriched in basic residues. A disordered region spans residues 1–24 (MAVPKKKTSRARRDRRRSHHALRG).

Belongs to the bacterial ribosomal protein bL32 family.

This Rubrobacter xylanophilus (strain DSM 9941 / JCM 11954 / NBRC 16129 / PRD-1) protein is Large ribosomal subunit protein bL32.